Reading from the N-terminus, the 138-residue chain is Molluscan insulin-related peptide 5 (138 aa).

The first 31 residues, 1 to 31 (MAGVRLVFTKAFMVTVLLTLLLNIGVKPAEG), serve as a signal peptide directing secretion. Position 32 is a pyrrolidone carboxylic acid (glutamine 32). 3 disulfides stabilise this stretch: cysteine 48–cysteine 124, cysteine 60–cysteine 137, and cysteine 123–cysteine 128. Positions 72-84 (DAETGWLLPETMV) are cleaved as a propeptide — C-beta peptide like. A propeptide spans 87–111 (NAQTDLDDPLRNIKLSSESALTYLT) (C-alpha peptide like). The residue at position 114 (glutamine 114) is a Pyrrolidone carboxylic acid.

The protein belongs to the insulin family. In terms of assembly, heterodimer of a B chain and an A chain linked by two disulfide bonds. In terms of tissue distribution, expressed in the cerebral light-green cells which are giant neuroendocrines cells involved in the control of growth.

It localises to the cytoplasmic vesicle. The protein localises to the secretory vesicle. The polypeptide is Molluscan insulin-related peptide 5 (Lymnaea stagnalis (Great pond snail)).